Consider the following 445-residue polypeptide: Probable glycine dehydrogenase (decarboxylating) subunit 1 (445 aa).

Belongs to the GcvP family. N-terminal subunit subfamily. In terms of assembly, the glycine cleavage system is composed of four proteins: P, T, L and H. In this organism, the P 'protein' is a heterodimer of two subunits.

It catalyses the reaction N(6)-[(R)-lipoyl]-L-lysyl-[glycine-cleavage complex H protein] + glycine + H(+) = N(6)-[(R)-S(8)-aminomethyldihydrolipoyl]-L-lysyl-[glycine-cleavage complex H protein] + CO2. Functionally, the glycine cleavage system catalyzes the degradation of glycine. The P protein binds the alpha-amino group of glycine through its pyridoxal phosphate cofactor; CO(2) is released and the remaining methylamine moiety is then transferred to the lipoamide cofactor of the H protein. This chain is Probable glycine dehydrogenase (decarboxylating) subunit 1, found in Anaeromyxobacter dehalogenans (strain 2CP-1 / ATCC BAA-258).